The sequence spans 251 residues: Hydroxyacylglutathione hydrolase (251 aa).

Zn(2+)-binding residues include His53, His55, Asp57, His58, His110, Asp127, and His165.

The protein belongs to the metallo-beta-lactamase superfamily. Glyoxalase II family. As to quaternary structure, monomer. The cofactor is Zn(2+).

The enzyme catalyses an S-(2-hydroxyacyl)glutathione + H2O = a 2-hydroxy carboxylate + glutathione + H(+). The protein operates within secondary metabolite metabolism; methylglyoxal degradation; (R)-lactate from methylglyoxal: step 2/2. Functionally, thiolesterase that catalyzes the hydrolysis of S-D-lactoyl-glutathione to form glutathione and D-lactic acid. The chain is Hydroxyacylglutathione hydrolase from Serratia proteamaculans (strain 568).